A 488-amino-acid chain; its full sequence is GTPase Der (488 aa).

Residues 3-166 form the EngA-type G 1 domain; sequence PVVALVGRPN…YALAPYAEAL (164 aa). GTP-binding positions include 9–16, 56–60, and 118–121; these read GRPNVGKS, DTGGI, and NKVD. The tract at residues 168 to 192 is disordered; it reads LNRDGDDEEEKEEREYTEEEAEAEQ. Over residues 172–190 the composition is skewed to acidic residues; it reads GDDEEEKEEREYTEEEAEA. Residues 200 to 373 form the EngA-type G 2 domain; it reads IKLAVIGKPN…SVQEAYESAT (174 aa). GTP is bound by residues 206-213, 253-257, and 318-321; these read GKPNVGKS, DTAGV, and NKWD. Residues 374-458 form the KH-like domain; sequence RRVSTSMLTR…PIQVRFQDGD (85 aa).

Belongs to the TRAFAC class TrmE-Era-EngA-EngB-Septin-like GTPase superfamily. EngA (Der) GTPase family. In terms of assembly, associates with the 50S ribosomal subunit.

GTPase that plays an essential role in the late steps of ribosome biogenesis. The chain is GTPase Der from Shewanella woodyi (strain ATCC 51908 / MS32).